A 198-amino-acid chain; its full sequence is Formate-dependent nitrite reductase complex subunit NrfG (198 aa).

TPR repeat units lie at residues 73 to 106 (SEQW…RGEN) and 144 to 177 (ITAL…NSPR).

Its function is as follows. Required for formate-dependent nitrite reduction. Not required for the biosynthesis of any of the c-type cytochromes nor for the secretion of the periplasmic cytochromes. This is Formate-dependent nitrite reductase complex subunit NrfG (nrfG) from Escherichia coli O157:H7.